The chain runs to 479 residues: 5-hydroxytryptamine receptor 7 (479 aa).

The Extracellular segment spans residues 1–83; that stretch reads MMDVNSSGRP…INYGRVEKVV (83 aa). Residues Asn-5 and Asn-66 are each glycosylated (N-linked (GlcNAc...) asparagine). Residues 84 to 108 traverse the membrane as a helical segment; the sequence is IGSILTLITLLTIAGNCLVVISVCF. Over 109–118 the chain is Cytoplasmic; sequence VKKLRQPSNY. A helical transmembrane segment spans residues 119 to 140; sequence LIVSLALADLSVAVAVMPFVSV. At 141–152 the chain is on the extracellular side; that stretch reads TDLIGGKWIFGH. Residues 153–178 form a helical membrane-spanning segment; sequence FFCNVFIAMDVMCCTASIMTLCVISI. The cysteines at positions 155 and 231 are disulfide-linked. Asp-162 is a serotonin binding site. The Cytoplasmic segment spans residues 179 to 198; that stretch reads DRYLGITRPLTYPVRQNGKC. A helical transmembrane segment spans residues 199 to 219; it reads MAKMILSVWLLSASITLPPLF. The Extracellular portion of the chain corresponds to 220 to 237; it reads GWAQNVNDDKVCLISQDF. A helical transmembrane segment spans residues 238–260; sequence GYTIYSTAVAFYIPMSVMLFMYY. The Cytoplasmic segment spans residues 261 to 326; sequence QIYKAARKSA…SIFKREQKAA (66 aa). A helical transmembrane segment spans residues 327–352; it reads TTLGIIVGAFTVCWLPFFLLSTARPF. The Extracellular portion of the chain corresponds to 353–363; it reads ICGTSCSCIPL. A helical membrane pass occupies residues 364-387; the sequence is WVERTFLWLGYANSLINPFIYAFF. The Cytoplasmic portion of the chain corresponds to 388-479; it reads NRDLRTTYRS…TVEKKVMIHD (92 aa). Residue Cys-401 is the site of S-palmitoyl cysteine attachment.

It belongs to the G-protein coupled receptor 1 family. As to expression, predominant isoform in spleen, caudate and hippocampus. In terms of tissue distribution, expressed at lower levels. Minor isoform in terms of expression.

The protein resides in the cell membrane. Its function is as follows. G-protein coupled receptor for 5-hydroxytryptamine (serotonin), a biogenic hormone that functions as a neurotransmitter, a hormone and a mitogen. Ligand binding causes a conformation change that triggers signaling via guanine nucleotide-binding proteins (G proteins) and modulates the activity of downstream effectors. HTR7 is coupled to G(s) G alpha proteins and mediates activation of adenylate cyclase activity. The sequence is that of 5-hydroxytryptamine receptor 7 from Homo sapiens (Human).